We begin with the raw amino-acid sequence, 279 residues long: Large ribosomal subunit protein uL2 (279 aa).

The tract at residues 223–279 is disordered; sequence VAMNPIDHPHGGGEGRTSGGRHPVTPWGKGTKGTRTRSNKSTDKYILRSRHAKKKGR. Residues 269–279 show a composition bias toward basic residues; that stretch reads LRSRHAKKKGR.

This sequence belongs to the universal ribosomal protein uL2 family. Part of the 50S ribosomal subunit. Forms a bridge to the 30S subunit in the 70S ribosome.

In terms of biological role, one of the primary rRNA binding proteins. Required for association of the 30S and 50S subunits to form the 70S ribosome, for tRNA binding and peptide bond formation. It has been suggested to have peptidyltransferase activity; this is somewhat controversial. Makes several contacts with the 16S rRNA in the 70S ribosome. This chain is Large ribosomal subunit protein uL2, found in Paracoccus denitrificans (strain Pd 1222).